The chain runs to 908 residues: Translation initiation factor IF-2 (908 aa).

Disordered regions lie at residues 122–180 (PVVE…VDDA) and 203–267 (EKAR…AVKK). The span at 132 to 143 (VAAEPEVVEAPE) shows a compositional bias: acidic residues. The span at 157–166 (EEPAAPAAPV) shows a compositional bias: low complexity. Positions 223 to 248 (AKEDARPTKHVEDLAKLKKPHDKKDE) are enriched in basic and acidic residues. The segment covering 256 to 267 (KHNKKAGKAVKK) has biased composition (basic residues). The 170-residue stretch at 409-578 (PRAPIVTVMG…ALQAELLELS (170 aa)) folds into the tr-type G domain. Residues 418–425 (GHVDHGKT) form a G1 region. 418-425 (GHVDHGKT) serves as a coordination point for GTP. The interval 443–447 (GITQH) is G2. The segment at 464–467 (DTPG) is G3. Residues 464-468 (DTPGH) and 518-521 (NKMD) each bind GTP. The tract at residues 518-521 (NKMD) is G4. The G5 stretch occupies residues 554–556 (SAH).

Belongs to the TRAFAC class translation factor GTPase superfamily. Classic translation factor GTPase family. IF-2 subfamily.

The protein localises to the cytoplasm. Its function is as follows. One of the essential components for the initiation of protein synthesis. Protects formylmethionyl-tRNA from spontaneous hydrolysis and promotes its binding to the 30S ribosomal subunits. Also involved in the hydrolysis of GTP during the formation of the 70S ribosomal complex. This Saccharophagus degradans (strain 2-40 / ATCC 43961 / DSM 17024) protein is Translation initiation factor IF-2.